We begin with the raw amino-acid sequence, 342 residues long: S-adenosyl-L-methionine-dependent tRNA 4-demethylwyosine synthase (342 aa).

Residues Cys-45, Cys-58, Cys-71, Cys-81, Cys-85, and Cys-88 each contribute to the [4Fe-4S] cluster site. Positions 64–312 constitute a Radical SAM core domain; the sequence is YGIHSHRCLQ…VKHLPGYHIE (249 aa).

It belongs to the TYW1 family. As to quaternary structure, monomer. It depends on [4Fe-4S] cluster as a cofactor.

The protein resides in the cytoplasm. It carries out the reaction N(1)-methylguanosine(37) in tRNA(Phe) + pyruvate + S-adenosyl-L-methionine = 4-demethylwyosine(37) in tRNA(Phe) + 5'-deoxyadenosine + L-methionine + CO2 + H2O. Its function is as follows. Component of the wyosine derivatives biosynthesis pathway that catalyzes the condensation of N-methylguanine with 2 carbon atoms from pyruvate to form the tricyclic 4-demethylwyosine (imG-14) on guanosine-37 of tRNA(Phe). This is S-adenosyl-L-methionine-dependent tRNA 4-demethylwyosine synthase from Pyrococcus abyssi (strain GE5 / Orsay).